The sequence spans 444 residues: Dihydroorotate dehydrogenase (quinone), mitochondrial (444 aa).

The helical transmembrane segment at 34 to 56 (GGASRYIIGTASVLVGAMAGFYI) threads the bilayer. Residues 124-128 (AGLDK) and Thr148 each bind FMN. Residue Lys128 coordinates substrate. A substrate-binding site is contributed by 173–177 (NRYGF). Positions 220 and 250 each coordinate FMN. Residue 250–255 (NVSSPN) coordinates substrate. The active-site Nucleophile is the Ser253. FMN is bound by residues Lys301 and Ser329. 330–331 (NT) serves as a coordination point for substrate. FMN is bound by residues Gly355, Gly385, and 406–407 (YT).

It belongs to the dihydroorotate dehydrogenase family. Type 2 subfamily. The cofactor is FMN.

Its subcellular location is the mitochondrion inner membrane. It carries out the reaction (S)-dihydroorotate + a quinone = orotate + a quinol. It functions in the pathway pyrimidine metabolism; UMP biosynthesis via de novo pathway; orotate from (S)-dihydroorotate (quinone route): step 1/1. Catalyzes the conversion of dihydroorotate to orotate with quinone as electron acceptor. In Eremothecium gossypii (strain ATCC 10895 / CBS 109.51 / FGSC 9923 / NRRL Y-1056) (Yeast), this protein is Dihydroorotate dehydrogenase (quinone), mitochondrial (URA9).